A 318-amino-acid polypeptide reads, in one-letter code: L-malyl-CoA/beta-methylmalyl-CoA lyase (318 aa).

Residues Phe19, Arg24, Lys30, and Arg76 each contribute to the substrate site. Residues Glu141 and Asp168 each coordinate Mg(2+). Substrate-binding positions include 167-168 (AD) and 251-252 (IH).

It belongs to the HpcH/HpaI aldolase family. As to quaternary structure, homohexamer. Dimer of trimers. Mg(2+) is required as a cofactor. Mn(2+) serves as cofactor.

It carries out the reaction (S)-malyl-CoA = glyoxylate + acetyl-CoA. The enzyme catalyses (2R,3S)-beta-methylmalyl-CoA = propanoyl-CoA + glyoxylate. In terms of biological role, involved in the ethylmalonyl-CoA pathway for acetate assimilation. Catalyzes the reversible condensation of glyoxylate and acetyl-CoA to L-malyl-CoA and the reversible condensation of glyoxylate and propionyl-CoA to yield beta-methylmalyl-CoA. This chain is L-malyl-CoA/beta-methylmalyl-CoA lyase, found in Cereibacter sphaeroides (strain ATCC 17029 / ATH 2.4.9) (Rhodobacter sphaeroides).